The following is a 167-amino-acid chain: Peptide deformylase (167 aa).

Fe cation contacts are provided by cysteine 91 and histidine 133. Glutamate 134 is an active-site residue. A Fe cation-binding site is contributed by histidine 137.

Belongs to the polypeptide deformylase family. Requires Fe(2+) as cofactor.

The catalysed reaction is N-terminal N-formyl-L-methionyl-[peptide] + H2O = N-terminal L-methionyl-[peptide] + formate. Functionally, removes the formyl group from the N-terminal Met of newly synthesized proteins. Requires at least a dipeptide for an efficient rate of reaction. N-terminal L-methionine is a prerequisite for activity but the enzyme has broad specificity at other positions. The sequence is that of Peptide deformylase from Neisseria meningitidis serogroup C (strain 053442).